We begin with the raw amino-acid sequence, 308 residues long: Hydroxyacylglutathione hydrolase, mitochondrial (308 aa).

Residues 1-13 (MVLGRGLLGRRSL) constitute a mitochondrion transit peptide. His-102, His-104, Asp-106, and His-107 together coordinate Zn(2+). Lys-116 is subject to N6-acetyllysine. Zn(2+)-binding residues include His-158 and Asp-182. Substrate contacts are provided by residues 191–193 (KFY) and 221–223 (HEY). His-221 serves as a coordination point for Zn(2+). Lys-229 carries the post-translational modification N6-acetyllysine; alternate. At Lys-229 the chain carries N6-succinyllysine; alternate. 297-300 (RKEK) lines the substrate pocket.

Belongs to the metallo-beta-lactamase superfamily. Glyoxalase II family. Monomer. Zn(2+) is required as a cofactor. In terms of tissue distribution, testis.

Its subcellular location is the mitochondrion matrix. The protein localises to the cytoplasm. The enzyme catalyses an S-(2-hydroxyacyl)glutathione + H2O = a 2-hydroxy carboxylate + glutathione + H(+). It carries out the reaction (R)-S-lactoylglutathione + H2O = (R)-lactate + glutathione + H(+). The protein operates within secondary metabolite metabolism; methylglyoxal degradation; (R)-lactate from methylglyoxal: step 2/2. Functionally, thiolesterase that catalyzes the hydrolysis of S-D-lactoyl-glutathione to form glutathione and D-lactic acid. This chain is Hydroxyacylglutathione hydrolase, mitochondrial (HAGH), found in Macaca fascicularis (Crab-eating macaque).